We begin with the raw amino-acid sequence, 227 residues long: Aspartyl protease inhibitor (227 aa).

Positions 1-15 are cleaved as a signal peptide; sequence MKLVVLCVLCGIALA. Basic and acidic residues predominate over residues 88–109; it reads SLKSRMAGKKEKAVTPKEEDLP. The interval 88–116 is disordered; it reads SLKSRMAGKKEKAVTPKEEDLPKAPQKPS. Residues cysteine 131 and cysteine 223 are joined by a disulfide bond.

The protein belongs to the protease inhibitor I33 family.

Its subcellular location is the secreted. Its function is as follows. Aspartyl protease inhibitor. The sequence is that of Aspartyl protease inhibitor (API) from Ostertagia ostertagi (Brown stomach worm).